Here is an 876-residue protein sequence, read N- to C-terminus: Ergothioneine biosynthesis protein 1 (876 aa).

Residues 36–350 are L-histidine N(alpha)-methyltransferase; it reads IIDIRRVAVE…TYGNEYGLHL (315 aa). Position 88 (Y88) interacts with L-histidine. S-adenosyl-L-methionine-binding residues include G119, K125, and D146. L-histidine contacts are provided by residues N202, Y242, and 315–317; that span reads EQS. The hercynylcysteine S-oxide synthase stretch occupies residues 378–874; sequence ALWATWDVVT…YAWVGARVVR (497 aa). Fe cation contacts are provided by H413, H506, and H510. Disordered stretches follow at residues 631-650 and 732-761; these read GTTN…QQLP and TNNG…SNTT. Low complexity predominate over residues 744–758; it reads PSSETPAESSSPSDS.

The protein in the N-terminal section; belongs to the methyltransferase superfamily. EgtD family. It in the C-terminal section; belongs to the EgtB family. Requires Fe(2+) as cofactor.

It is found in the cytoplasm. The protein localises to the nucleus. It catalyses the reaction L-histidine + 3 S-adenosyl-L-methionine = hercynine + 3 S-adenosyl-L-homocysteine + 3 H(+). The catalysed reaction is hercynine + L-cysteine + O2 = S-(hercyn-2-yl)-L-cysteine S-oxide + H2O. The protein operates within amino-acid biosynthesis; ergothioneine biosynthesis. Functionally, catalyzes the SAM-dependent triple methylation of the alpha-amino group of histidine to form hercynine and subsequent conjugation with cysteine and oxygen to form hercynylcysteine sulfoxide, the first two steps in the biosynthesis pathway of ergothioneine. Ergothioneine is an unusual thio-histidine betaine amino acid that acts as an antioxidant against peroxide in conidia and contributes to conidial longevity. In Neurospora crassa (strain ATCC 24698 / 74-OR23-1A / CBS 708.71 / DSM 1257 / FGSC 987), this protein is Ergothioneine biosynthesis protein 1.